Here is a 270-residue protein sequence, read N- to C-terminus: 4-hydroxy-tetrahydrodipicolinate reductase (270 aa).

Residues 11–16 (GAGGRM) and E37 contribute to the NAD(+) site. R38 provides a ligand contact to NADP(+). NAD(+) contacts are provided by residues 101 to 103 (GTT) and 125 to 128 (APNM). H158 (proton donor/acceptor) is an active-site residue. H159 contacts (S)-2,3,4,5-tetrahydrodipicolinate. The active-site Proton donor is the K162. (S)-2,3,4,5-tetrahydrodipicolinate is bound at residue 168–169 (GT).

Belongs to the DapB family.

The protein resides in the cytoplasm. It catalyses the reaction (S)-2,3,4,5-tetrahydrodipicolinate + NAD(+) + H2O = (2S,4S)-4-hydroxy-2,3,4,5-tetrahydrodipicolinate + NADH + H(+). It carries out the reaction (S)-2,3,4,5-tetrahydrodipicolinate + NADP(+) + H2O = (2S,4S)-4-hydroxy-2,3,4,5-tetrahydrodipicolinate + NADPH + H(+). It participates in amino-acid biosynthesis; L-lysine biosynthesis via DAP pathway; (S)-tetrahydrodipicolinate from L-aspartate: step 4/4. Catalyzes the conversion of 4-hydroxy-tetrahydrodipicolinate (HTPA) to tetrahydrodipicolinate. The polypeptide is 4-hydroxy-tetrahydrodipicolinate reductase (Shewanella baltica (strain OS223)).